The chain runs to 201 residues: 3-isopropylmalate dehydratase small subunit (201 aa).

This sequence belongs to the LeuD family. LeuD type 1 subfamily. In terms of assembly, heterodimer of LeuC and LeuD.

It carries out the reaction (2R,3S)-3-isopropylmalate = (2S)-2-isopropylmalate. Its pathway is amino-acid biosynthesis; L-leucine biosynthesis; L-leucine from 3-methyl-2-oxobutanoate: step 2/4. Functionally, catalyzes the isomerization between 2-isopropylmalate and 3-isopropylmalate, via the formation of 2-isopropylmaleate. The sequence is that of 3-isopropylmalate dehydratase small subunit from Rhodopseudomonas palustris (strain BisA53).